The sequence spans 373 residues: Putative F-box protein At1g76830 (373 aa).

An F-box domain is found at 4-49; sequence ITSFENLPEELKREILLRMSPNSLVTCSRVSKKLASMIRTKSFKEL.

The sequence is that of Putative F-box protein At1g76830 from Arabidopsis thaliana (Mouse-ear cress).